A 450-amino-acid polypeptide reads, in one-letter code: 3-phosphoshikimate 1-carboxyvinyltransferase (450 aa).

Positions M1–P25 are disordered. 3-phosphoshikimate contacts are provided by K28, S29, and R33. Residue K28 participates in phosphoenolpyruvate binding. The phosphoenolpyruvate site is built by G101 and R129. Positions 174, 176, 327, and 354 each coordinate 3-phosphoshikimate. Q176 lines the phosphoenolpyruvate pocket. D327 acts as the Proton acceptor in catalysis. 2 residues coordinate phosphoenolpyruvate: R358 and R403.

This sequence belongs to the EPSP synthase family. As to quaternary structure, monomer.

The protein localises to the cytoplasm. The enzyme catalyses 3-phosphoshikimate + phosphoenolpyruvate = 5-O-(1-carboxyvinyl)-3-phosphoshikimate + phosphate. The protein operates within metabolic intermediate biosynthesis; chorismate biosynthesis; chorismate from D-erythrose 4-phosphate and phosphoenolpyruvate: step 6/7. Its function is as follows. Catalyzes the transfer of the enolpyruvyl moiety of phosphoenolpyruvate (PEP) to the 5-hydroxyl of shikimate-3-phosphate (S3P) to produce enolpyruvyl shikimate-3-phosphate and inorganic phosphate. This chain is 3-phosphoshikimate 1-carboxyvinyltransferase, found in Jannaschia sp. (strain CCS1).